We begin with the raw amino-acid sequence, 350 residues long: D-alanine--D-alanine ligase (350 aa).

Positions 133-334 (NDIFELNKIP…VSEVFDNLIG (202 aa)) constitute an ATP-grasp domain. Residue 161–216 (FEKTSKAVYVKPCNAGSSVGVMRAETEEELEKAIQNAFQYDRRILVEEEIIGPELQ) coordinates ATP. Mg(2+)-binding residues include D288, E300, and N302.

The protein belongs to the D-alanine--D-alanine ligase family. Mg(2+) is required as a cofactor. Requires Mn(2+) as cofactor.

The protein resides in the cytoplasm. It carries out the reaction 2 D-alanine + ATP = D-alanyl-D-alanine + ADP + phosphate + H(+). Its pathway is cell wall biogenesis; peptidoglycan biosynthesis. Cell wall formation. In Finegoldia magna (strain ATCC 29328 / DSM 20472 / WAL 2508) (Peptostreptococcus magnus), this protein is D-alanine--D-alanine ligase.